The chain runs to 108 residues: Nitrite reductase (NADH) small subunit (108 aa).

As to quaternary structure, associates with NirB.

It localises to the cytoplasm. The enzyme catalyses NH4(+) + 3 NAD(+) + 2 H2O = nitrite + 3 NADH + 5 H(+). Its function is as follows. Required for activity of the reductase. This chain is Nitrite reductase (NADH) small subunit (nirD), found in Salmonella typhi.